A 404-amino-acid polypeptide reads, in one-letter code: 11-beta-hydroxysteroid dehydrogenase type 2 (404 aa).

An NAD(+)-binding site is contributed by 82–111 (TRAVLITGCDSGFGNATAKKLDTMGFTVLA). Residue Ser-219 participates in substrate binding. Catalysis depends on Tyr-232, which acts as the Proton acceptor. The segment at 383–404 (LTSARDIAQDQGPRPDPSPTAQ) is disordered.

This sequence belongs to the short-chain dehydrogenases/reductases (SDR) family. Interacts with ligand-free cytoplasmic NR3C2. As to expression, highly expressed in kidney, adrenal and colon; detected at lower levels on lung, liver, and spleen. Expressed in oocytes. Expressed in uterine tissues and in corpora lutea.

Its subcellular location is the microsome. It is found in the endoplasmic reticulum. It carries out the reaction an 11beta-hydroxysteroid + NAD(+) = an 11-oxosteroid + NADH + H(+). It catalyses the reaction corticosterone + NAD(+) = 11-dehydrocorticosterone + NADH + H(+). The catalysed reaction is cortisol + NAD(+) = cortisone + NADH + H(+). The enzyme catalyses 11beta,17beta-dihydroxyandrost-4-ene-3-one + NAD(+) = 17beta-hydroxyandrost-4-ene-3,11-dione + NADH + H(+). It carries out the reaction 11beta-hydroxyandrost-4-ene-3,17-dione + NAD(+) = androst-4-ene-3,11,17-trione + NADH + H(+). Its pathway is steroid metabolism. Its activity is regulated as follows. Inhibited by glycyrrhetinic acid, carbenoloxone, 11-alpha-OH-progesterone and 11-beta-OH-progesterone. Functionally, catalyzes the conversion of biologically active 11beta-hydroxyglucocorticoids (11beta-hydroxysteroid) such as cortisol, to inactive 11-ketoglucocorticoids (11-oxosteroid) such as cortisone, in the presence of NAD(+). Functions as a dehydrogenase (oxidase), thereby decreasing the concentration of active glucocorticoids, thus protecting the nonselective mineralocorticoid receptor from occupation by glucocorticoids. Affinity towards corticosterone is higher than cortisol or dexamethasone. Plays an important role in maintaining glucocorticoids balance during preimplantation and protects the fetus from excessive maternal corticosterone exposure. Catalyzes the oxidation of 11beta-hydroxytestosterone (11beta,17beta-dihydroxyandrost-4-ene-3-one) to 11-ketotestosterone (17beta-hydroxyandrost-4-ene-3,11-dione), a major bioactive androgen. Catalyzes the conversion of 11beta-hydroxyandrostenedione (11beta-hydroxyandrost-4-ene-3,17-dione) to 11-ketoandrostenedione (androst-4-ene-3,11,17-trione), which can be further metabolized to 11-ketotestosterone. Converts 7-beta-25-dihydroxycholesterol to 7-oxo-25-hydroxycholesterol in vitro. 7-beta-25-dihydroxycholesterol (not 7-oxo-25-hydroxycholesterol) acts as ligand for the G-protein-coupled receptor (GPCR) Epstein-Barr virus-induced gene 2 (EBI2) and may thereby regulate immune cell migration. May protect ovulating oocytes and fertilizing spermatozoa from the adverse effects of cortisol. The chain is 11-beta-hydroxysteroid dehydrogenase type 2 (HSD11B2) from Bos taurus (Bovine).